Here is a 403-residue protein sequence, read N- to C-terminus: Acetyl-CoA acetyltransferase IB (403 aa).

C91 (acyl-thioester intermediate) is an active-site residue. Residues H353 and C383 each act as proton acceptor in the active site. A Microbody targeting signal motif is present at residues 401-403 (AKL).

The protein belongs to the thiolase-like superfamily. Thiolase family. As to quaternary structure, multimeric.

It localises to the peroxisome. The catalysed reaction is 2 acetyl-CoA = acetoacetyl-CoA + CoA. Its pathway is metabolic intermediate biosynthesis; (R)-mevalonate biosynthesis; (R)-mevalonate from acetyl-CoA: step 1/3. In Candida tropicalis (Yeast), this protein is Acetyl-CoA acetyltransferase IB (PACTB).